We begin with the raw amino-acid sequence, 714 residues long: ATP-dependent DNA helicase DinG (714 aa).

The region spanning 17–294 is the Helicase ATP-binding domain; sequence ALQDQIPDFI…TCMEQFRPKT (278 aa). Residue 54-61 participates in ATP binding; that stretch reads APTGVGKT. [4Fe-4S] cluster-binding residues include C120, C194, C199, and C205. Positions 248–251 match the DEAH box motif; it reads DEGH. A Helicase C-terminal domain is found at 517–698; the sequence is HIAEMAAYFR…VFPIEQPAVP (182 aa).

Belongs to the helicase family. DinG subfamily. Type 1 sub-subfamily. [4Fe-4S] cluster serves as cofactor.

The catalysed reaction is Couples ATP hydrolysis with the unwinding of duplex DNA at the replication fork by translocating in the 5'-3' direction. This creates two antiparallel DNA single strands (ssDNA). The leading ssDNA polymer is the template for DNA polymerase III holoenzyme which synthesizes a continuous strand.. It catalyses the reaction ATP + H2O = ADP + phosphate + H(+). Its function is as follows. DNA-dependent ATPase and 5'-3' DNA helicase. Unwinds D-loops, R-loops, forked DNA and G-quadruplex DNA. This is ATP-dependent DNA helicase DinG from Salmonella typhimurium (strain LT2 / SGSC1412 / ATCC 700720).